The sequence spans 148 residues: uncharacterized protein (148 aa).

The disordered stretch occupies residues 83 to 148 (QPAVIPPVKA…TKKSNKKTRS (66 aa)). Composition is skewed to basic residues over residues 92 to 103 (AKPKATKKKTPV) and 113 to 124 (KQTKPKQSKPKS).

This is an uncharacterized protein from Mycoplasma genitalium (strain ATCC 33530 / DSM 19775 / NCTC 10195 / G37) (Mycoplasmoides genitalium).